The following is a 357-amino-acid chain: Nicotinate-nucleotide--dimethylbenzimidazole phosphoribosyltransferase (357 aa).

E323 serves as the catalytic Proton acceptor.

Belongs to the CobT family.

It catalyses the reaction 5,6-dimethylbenzimidazole + nicotinate beta-D-ribonucleotide = alpha-ribazole 5'-phosphate + nicotinate + H(+). It participates in nucleoside biosynthesis; alpha-ribazole biosynthesis; alpha-ribazole from 5,6-dimethylbenzimidazole: step 1/2. Its function is as follows. Catalyzes the synthesis of alpha-ribazole-5'-phosphate from nicotinate mononucleotide (NAMN) and 5,6-dimethylbenzimidazole (DMB). The sequence is that of Nicotinate-nucleotide--dimethylbenzimidazole phosphoribosyltransferase from Nitratidesulfovibrio vulgaris (strain ATCC 29579 / DSM 644 / CCUG 34227 / NCIMB 8303 / VKM B-1760 / Hildenborough) (Desulfovibrio vulgaris).